The primary structure comprises 392 residues: Tropomodulin (392 aa).

Disordered regions lie at residues 1-30 (MSQAKTDYYSEEKTFSAPSANSQQGTQLPS), 59-90 (DLNNDFDPDNSMLPPSQRCRDQTDKEPTGPYK), and 118-138 (QKRGKVYDSDSGRNSEEPENG). A compositionally biased stretch (polar residues) spans 16-29 (SAPSANSQQGTQLP). 2 stretches are compositionally biased toward basic and acidic residues: residues 76–90 (RCRDQTDKEPTGPYK) and 122–138 (KVYDSDSGRNSEEPENG).

Belongs to the tropomodulin family. As to quaternary structure, binds to the N-terminus of actin.

It localises to the cytoplasm. The protein resides in the cytoskeleton. Functionally, acts as the pointed end capping protein which maintains the length and dynamics of the actin filament. Blocks the elongation and depolymerization of the actin filaments at the pointed end. The polypeptide is Tropomodulin (unc-94) (Caenorhabditis elegans).